A 218-amino-acid chain; its full sequence is Small ribosomal subunit protein uS3c (218 aa).

Residues 47–118 (VQKNIRISSG…KLNIAITRIT (72 aa)) enclose the KH type-2 domain.

It belongs to the universal ribosomal protein uS3 family. As to quaternary structure, part of the 30S ribosomal subunit.

The protein resides in the plastid. It localises to the chloroplast. The polypeptide is Small ribosomal subunit protein uS3c (rps3) (Vitis vinifera (Grape)).